Here is a 143-residue protein sequence, read N- to C-terminus: MAKKILGYIKLQVKAGSATPSPPIGPALGQRGVNIMGFCKEFNARTENVEKGTPLPTVITVYQDKSFTFVTKTPPATHYLKQITGLKSGAKLTGRETVGEVTRTQLREIAEKKMKDLNANDLEAAAKIIEGSAKAMGLKIVEA.

The protein belongs to the universal ribosomal protein uL11 family. In terms of assembly, part of the ribosomal stalk of the 50S ribosomal subunit. Interacts with L10 and the large rRNA to form the base of the stalk. L10 forms an elongated spine to which L12 dimers bind in a sequential fashion forming a multimeric L10(L12)X complex. Post-translationally, one or more lysine residues are methylated.

In terms of biological role, forms part of the ribosomal stalk which helps the ribosome interact with GTP-bound translation factors. The chain is Large ribosomal subunit protein uL11 from Caulobacter sp. (strain K31).